A 361-amino-acid chain; its full sequence is S-adenosylmethionine:tRNA ribosyltransferase-isomerase (361 aa).

The protein belongs to the QueA family. In terms of assembly, monomer.

It is found in the cytoplasm. The enzyme catalyses 7-aminomethyl-7-carbaguanosine(34) in tRNA + S-adenosyl-L-methionine = epoxyqueuosine(34) in tRNA + adenine + L-methionine + 2 H(+). It participates in tRNA modification; tRNA-queuosine biosynthesis. Transfers and isomerizes the ribose moiety from AdoMet to the 7-aminomethyl group of 7-deazaguanine (preQ1-tRNA) to give epoxyqueuosine (oQ-tRNA). This Actinobacillus pleuropneumoniae serotype 7 (strain AP76) protein is S-adenosylmethionine:tRNA ribosyltransferase-isomerase.